We begin with the raw amino-acid sequence, 421 residues long: MTKDIAQVMAEVGRKAKAAAAPLSIATSEQKNKALNAAADAILEARADILEANRLDLANAEKNGMAASFVDRLTLNEARIDAIAEGIRAIATLPDPVGEVIAEWDRPNGLHIERVRTPLGVIGVIYESRPNVTADAGALCLKAGNAVILRGGSDSAHSSAAIHKALVKGLEAANLPADAIQIVPVTDRAAVGEMLKGLGGAIDVIVPRGGKSLVARVQSEARVPVFAHLEGICHLYIDKSADLDMARRIALDAKMRRTGICGAAETLLVDRAVASTHLAPILGDLAAGGCEIRGSAEVLALYPAAKPATEEDWSTEYLDAIISVALVDGISGAIDHINRYSSHHTEAIVAEDAQTVARFFNEIDSAILLHNASTQFADGGEFGMGAEIGIATGKMHARGPVGVEQLTSFKYRVRGSGQVRG.

It belongs to the gamma-glutamyl phosphate reductase family.

Its subcellular location is the cytoplasm. It catalyses the reaction L-glutamate 5-semialdehyde + phosphate + NADP(+) = L-glutamyl 5-phosphate + NADPH + H(+). The protein operates within amino-acid biosynthesis; L-proline biosynthesis; L-glutamate 5-semialdehyde from L-glutamate: step 2/2. Catalyzes the NADPH-dependent reduction of L-glutamate 5-phosphate into L-glutamate 5-semialdehyde and phosphate. The product spontaneously undergoes cyclization to form 1-pyrroline-5-carboxylate. The chain is Gamma-glutamyl phosphate reductase from Brucella abortus (strain 2308).